Reading from the N-terminus, the 93-residue chain is Small ribosomal subunit protein uS19 (93 aa).

Belongs to the universal ribosomal protein uS19 family.

In terms of biological role, protein S19 forms a complex with S13 that binds strongly to the 16S ribosomal RNA. The protein is Small ribosomal subunit protein uS19 of Rubrobacter xylanophilus (strain DSM 9941 / JCM 11954 / NBRC 16129 / PRD-1).